Reading from the N-terminus, the 327-residue chain is Methionyl-tRNA formyltransferase (327 aa).

121-124 is a (6S)-5,6,7,8-tetrahydrofolate binding site; sequence SLLP.

This sequence belongs to the Fmt family.

The enzyme catalyses L-methionyl-tRNA(fMet) + (6R)-10-formyltetrahydrofolate = N-formyl-L-methionyl-tRNA(fMet) + (6S)-5,6,7,8-tetrahydrofolate + H(+). Functionally, attaches a formyl group to the free amino group of methionyl-tRNA(fMet). The formyl group appears to play a dual role in the initiator identity of N-formylmethionyl-tRNA by promoting its recognition by IF2 and preventing the misappropriation of this tRNA by the elongation apparatus. The protein is Methionyl-tRNA formyltransferase of Burkholderia ambifaria (strain ATCC BAA-244 / DSM 16087 / CCUG 44356 / LMG 19182 / AMMD) (Burkholderia cepacia (strain AMMD)).